Reading from the N-terminus, the 404-residue chain is Chorismate synthase (404 aa).

The NADP(+) site is built by arginine 40 and arginine 46. FMN is bound by residues 136 to 138 (RAS), 257 to 258 (QA), glycine 301, 316 to 320 (KPIST), and arginine 342.

Belongs to the chorismate synthase family. As to quaternary structure, homotetramer. Requires FMNH2 as cofactor.

It catalyses the reaction 5-O-(1-carboxyvinyl)-3-phosphoshikimate = chorismate + phosphate. Its pathway is metabolic intermediate biosynthesis; chorismate biosynthesis; chorismate from D-erythrose 4-phosphate and phosphoenolpyruvate: step 7/7. Its function is as follows. Catalyzes the anti-1,4-elimination of the C-3 phosphate and the C-6 proR hydrogen from 5-enolpyruvylshikimate-3-phosphate (EPSP) to yield chorismate, which is the branch point compound that serves as the starting substrate for the three terminal pathways of aromatic amino acid biosynthesis. This reaction introduces a second double bond into the aromatic ring system. The chain is Chorismate synthase from Mycolicibacterium vanbaalenii (strain DSM 7251 / JCM 13017 / BCRC 16820 / KCTC 9966 / NRRL B-24157 / PYR-1) (Mycobacterium vanbaalenii).